The chain runs to 29 residues: ATP synthase subunit 9, mitochondrial (29 aa).

The protein belongs to the ATPase C chain family. F-type ATPases have 2 components, CF(1) - the catalytic core - and CF(0) - the membrane proton channel. CF(1) has five subunits: alpha(3), beta(3), gamma(1), delta(1), epsilon(1). CF(0) has three main subunits: a, b and c.

It localises to the mitochondrion membrane. Mitochondrial membrane ATP synthase (F(1)F(0) ATP synthase or Complex V) produces ATP from ADP in the presence of a proton gradient across the membrane which is generated by electron transport complexes of the respiratory chain. F-type ATPases consist of two structural domains, F(1) - containing the extramembraneous catalytic core and F(0) - containing the membrane proton channel, linked together by a central stalk and a peripheral stalk. During catalysis, ATP synthesis in the catalytic domain of F(1) is coupled via a rotary mechanism of the central stalk subunits to proton translocation. Part of the complex F(0) domain. A homomeric c-ring of probably 10 subunits is part of the complex rotary element. In Wickerhamomyces pijperi (Yeast), this protein is ATP synthase subunit 9, mitochondrial (ATP9).